A 930-amino-acid chain; its full sequence is Inter-alpha-trypsin inhibitor heavy chain H4 (930 aa).

The first 28 residues, 1-28 (MKPPRPVRTCSKVLVLLSLLAIHQTTTA), serve as a signal peptide directing secretion. The region spanning 29–148 (EKNGIDIYSL…KITFELVYEE (120 aa)) is the VIT domain. Asn-81 and Asn-207 each carry an N-linked (GlcNAc...) asparagine glycan. Positions 272–432 (PKNVVFVIDK…YAFLEKLALD (161 aa)) constitute a VWFA domain. A glycan (N-linked (GlcNAc...) asparagine; atypical) is linked at Asn-274. 2 N-linked (GlcNAc...) asparagine glycosylation sites follow: Asn-517 and Asn-577. A disordered region spans residues 595–618 (KPDDQEQSQVAEKPMEGESRNRNV). Residues 658-688 (MNFRPGVLSSRQLGLPGPPDVPDHAAYHPFR) are proline-rich (PRR) potential bioactive peptide. A propeptide spans 662 to 688 (PGVLSSRQLGLPGPPDVPDHAAYHPFR) (potentially active peptide). O-linked (GalNAc...) threonine glycans are attached at residues Thr-719, Thr-720, and Thr-722. The interval 719-725 (TTMTTQT) is O-glycosylated at three sites. Residues Cys-747 and Cys-925 are joined by a disulfide bond.

This sequence belongs to the ITIH family. Interacts (via C-terminus) with DNAJC1 (via SANT 2 domain); this interaction protects ITIH4 against cleavage by kallikrein in vitro. Cleaved by plasma kallikrein to yield 100 kDa and 35 kDa fragments, and the resulting 100 kDa fragment is further converted to a 70 kDa fragment. In terms of processing, N- and O-glycosylated. In urine, O-linked glycosylation on threonine residues in the region from Thr-719 to Thr-725 consists of core 1 or possibly core 8 glycans. Mainly Hex(HexNAc)(2), but also some Hex(3)(HexNAc)(3). N-glycosylated but not O-glycosylated in plasma. In terms of tissue distribution, liver specific.

The protein localises to the secreted. In terms of biological role, type II acute-phase protein (APP) involved in inflammatory responses to trauma. May also play a role in liver development or regeneration. This chain is Inter-alpha-trypsin inhibitor heavy chain H4 (ITIH4), found in Homo sapiens (Human).